A 229-amino-acid chain; its full sequence is Cytidylate kinase (229 aa).

10-18 (GFSSCGKST) contributes to the ATP binding site.

The protein belongs to the cytidylate kinase family. Type 1 subfamily.

Its subcellular location is the cytoplasm. The enzyme catalyses CMP + ATP = CDP + ADP. It carries out the reaction dCMP + ATP = dCDP + ADP. This chain is Cytidylate kinase, found in Bacteroides thetaiotaomicron (strain ATCC 29148 / DSM 2079 / JCM 5827 / CCUG 10774 / NCTC 10582 / VPI-5482 / E50).